A 206-amino-acid polypeptide reads, in one-letter code: Ribosomal RNA small subunit methyltransferase G (206 aa).

S-adenosyl-L-methionine contacts are provided by residues glycine 73, leucine 78, 124 to 125, and arginine 139; that span reads VE.

This sequence belongs to the methyltransferase superfamily. RNA methyltransferase RsmG family.

It localises to the cytoplasm. The enzyme catalyses guanosine(527) in 16S rRNA + S-adenosyl-L-methionine = N(7)-methylguanosine(527) in 16S rRNA + S-adenosyl-L-homocysteine. Its function is as follows. Specifically methylates the N7 position of guanine in position 527 of 16S rRNA. This chain is Ribosomal RNA small subunit methyltransferase G, found in Pectobacterium carotovorum subsp. carotovorum (strain PC1).